The following is a 209-amino-acid chain: MLVWEELREKALNKIYHDKEIGYLDPDILGFLLAFYRNRNDVYTQSSCSGRITIVDAEMPWDRKNSTIIFKNHLRITEQDLEDVLSKNQVRRLWLIVQGPIIHIYAKNIETGWDILKIAREAGFKHSGILATNQKGVLVELRTGIRMVHLLRESNTERVDKDKIKTLVNVCNEVLARGKQKMNLLKDLLSSSSNNSMELGKNSKLKTPI.

This sequence belongs to the TYW3 family.

The catalysed reaction is 4-demethyl-7-[(3S)-3-amino-3-carboxypropyl]wyosine(37) in tRNA(Phe) + S-adenosyl-L-methionine = 7-[(3S)-3-amino-3-carboxypropyl]wyosine(37) in tRNA(Phe) + S-adenosyl-L-homocysteine + H(+). Functionally, S-adenosyl-L-methionine-dependent methyltransferase that acts as a component of the wyosine derivatives biosynthesis pathway. Probably methylates N-4 position of wybutosine-86 to produce wybutosine-72. The protein is tRNA(Phe) 7-((3-amino-3-carboxypropyl)-4-demethylwyosine(37)-N(4))-methyltransferase of Saccharolobus solfataricus (strain ATCC 35092 / DSM 1617 / JCM 11322 / P2) (Sulfolobus solfataricus).